A 217-amino-acid polypeptide reads, in one-letter code: Small ribosomal subunit protein uS3 (217 aa).

A KH type-2 domain is found at 38–106 (IRKFINKELA…QVHINIIEIK (69 aa)).

Belongs to the universal ribosomal protein uS3 family. In terms of assembly, part of the 30S ribosomal subunit. Forms a tight complex with proteins S10 and S14.

In terms of biological role, binds the lower part of the 30S subunit head. Binds mRNA in the 70S ribosome, positioning it for translation. This chain is Small ribosomal subunit protein uS3, found in Streptococcus pyogenes serotype M6 (strain ATCC BAA-946 / MGAS10394).